Reading from the N-terminus, the 92-residue chain is Small ribosomal subunit protein bS21 (92 aa).

The tract at residues 37–92 (QREGTFREMKRRNHYEKPSEKKARQKAEAIRRARKLARKRAQREGLIAKRGGTTRR) is disordered. Positions 51–67 (YEKPSEKKARQKAEAIR) are enriched in basic and acidic residues. Positions 68–77 (RARKLARKRA) are enriched in basic residues.

Belongs to the bacterial ribosomal protein bS21 family.

This Maricaulis maris (strain MCS10) (Caulobacter maris) protein is Small ribosomal subunit protein bS21.